Here is a 188-residue protein sequence, read N- to C-terminus: dCTP deaminase (188 aa).

DCTP is bound by residues 111–116 (KSTYAR), 135–137 (TLE), Gln156, Tyr170, and Gln180. Glu137 functions as the Proton donor/acceptor in the catalytic mechanism.

Belongs to the dCTP deaminase family. As to quaternary structure, homotrimer.

It carries out the reaction dCTP + H2O + H(+) = dUTP + NH4(+). Its pathway is pyrimidine metabolism; dUMP biosynthesis; dUMP from dCTP (dUTP route): step 1/2. Catalyzes the deamination of dCTP to dUTP. The sequence is that of dCTP deaminase from Paracidovorax citrulli (strain AAC00-1) (Acidovorax citrulli).